We begin with the raw amino-acid sequence, 748 residues long: Cysteine--tRNA ligase, cytoplasmic (748 aa).

A disordered region spans residues 1 to 25 (MADSSGQQGKGRRVQPQWSPPAGTQ). Ala-2 bears the N-acetylalanine mark. A Phosphoserine modification is found at Ser-19. Cys-55 is a binding site for Zn(2+). Gly-56 contributes to the L-cysteine binding site. Residues 57 to 67 (PTVYDASHMGH) carry the 'HIGH' region motif. Residue Arg-79 is modified to Phosphoserine. Thr-96 is an L-cysteine binding site. The short motif at 101–104 (KIIK) is the 'KIIK' region element. Residues Ser-305 and Ser-307 each carry the phosphoserine modification. Zn(2+) contacts are provided by Cys-348, His-373, and Glu-377. Position 373 (His-373) interacts with L-cysteine. The 'KMSKS' region signature appears at 406-410 (KMSKS). Lys-409 contacts ATP. Residue Lys-503 is modified to N6-acetyllysine. A compositionally biased stretch (basic and acidic residues) spans 653-679 (EKRRVEEEKRKKKEEAARRKQEQEAAK). Residues 653–686 (EKRRVEEEKRKKKEEAARRKQEQEAAKLAKMKIP) form a disordered region. A Phosphoserine modification is found at Ser-746.

It belongs to the class-I aminoacyl-tRNA synthetase family. As to quaternary structure, homodimer. The cofactor is Zn(2+).

It is found in the cytoplasm. The enzyme catalyses tRNA(Cys) + L-cysteine + ATP = L-cysteinyl-tRNA(Cys) + AMP + diphosphate. In terms of biological role, catalyzes the ATP-dependent ligation of cysteine to tRNA(Cys). The protein is Cysteine--tRNA ligase, cytoplasmic of Homo sapiens (Human).